The chain runs to 486 residues: Amyloid-beta A4 precursor protein-binding family B member 3 (486 aa).

Positions 29 to 61 (TGLPPGWRKIRDAAGTYYWHVPSGSTQWQRPTW) constitute a WW domain. PID domains follow at residues 113 to 280 (EPGA…QVEL) and 285 to 440 (SQAA…RTSS). Residues 438–460 (TSSMDSPGGPLPPPLLKGGAGGA) form a disordered region.

In terms of assembly, interacts with APP (via intracellular domain). Interacts with APLP1 and APLP2 (via intracellular domain).

The protein resides in the cytoplasm. It is found in the nucleus. Functionally, may modulate the internalization of amyloid-beta precursor protein. In Mus musculus (Mouse), this protein is Amyloid-beta A4 precursor protein-binding family B member 3.